Consider the following 153-residue polypeptide: Small ribosomal subunit protein bS6 (153 aa).

The disordered stretch occupies residues 97–153; sequence EEGPSAMMRKADRDRERDDRGGGFRGERDGGGFRGDRGDRGDRGPRRPRDEETADEE. Residues 105–147 are compositionally biased toward basic and acidic residues; that stretch reads RKADRDRERDDRGGGFRGERDGGGFRGDRGDRGDRGPRRPRDE.

Belongs to the bacterial ribosomal protein bS6 family.

Binds together with bS18 to 16S ribosomal RNA. The sequence is that of Small ribosomal subunit protein bS6 from Bradyrhizobium sp. (strain BTAi1 / ATCC BAA-1182).